The chain runs to 172 residues: RNA pyrophosphohydrolase (172 aa).

A Nudix hydrolase domain is found at 6 to 149 (GYRLNVGIVI…KRDVYRRAMK (144 aa)). The Nudix box motif lies at 38-59 (GGIDEGETPEQAMYRELYEEVG).

Belongs to the Nudix hydrolase family. RppH subfamily. It depends on a divalent metal cation as a cofactor.

Its function is as follows. Accelerates the degradation of transcripts by removing pyrophosphate from the 5'-end of triphosphorylated RNA, leading to a more labile monophosphorylated state that can stimulate subsequent ribonuclease cleavage. The sequence is that of RNA pyrophosphohydrolase from Vibrio atlanticus (strain LGP32) (Vibrio splendidus (strain Mel32)).